Consider the following 867-residue polypeptide: Rifampicin phosphotransferase (867 aa).

The interval Met-1 to Thr-314 is ATP-binding. 8 residues coordinate ATP: Lys-22, Arg-117, Gly-132, Thr-136, Gln-183, Glu-297, Gln-309, and Arg-311. The tract at residues Asn-327–Glu-754 is rifampicin-binding. Residues Gln-336 and Tyr-351 each contribute to the rifampicin site. The segment at Gly-767–Ile-865 is swivel phosphohistidine. His-825 functions as the Tele-phosphohistidine intermediate in the catalytic mechanism.

The protein belongs to the rifampicin phosphotransferase family.

The enzyme catalyses rifampicin + ATP + H2O = 21-phosphorifampicin + AMP + phosphate + 2 H(+). In terms of biological role, catalyzes the phosphorylation of rifampicin, also known as rifampin (RIF), leading to its inactivation. Confers high level resistance to a variety of clinically used rifamycin antibiotics. Does not show phosphoenolpyruvate (PEP) synthase activity. In Listeria monocytogenes serotype 4b (strain F2365), this protein is Rifampicin phosphotransferase.